Consider the following 526-residue polypeptide: GMP synthase [glutamine-hydrolyzing] (526 aa).

The Glutamine amidotransferase type-1 domain occupies 3–199; it reads KVAIIDFGSQ…FIKIAGCKTD (197 aa). The Nucleophile role is filled by Cys-83. Residues His-174 and Glu-176 contribute to the active site. The 193-residue stretch at 200–392 folds into the GMPS ATP-PPase domain; that stretch reads WTMNSFLDEQ…LGISDEILMR (193 aa). 227–233 provides a ligand contact to ATP; the sequence is SGGVDSS.

As to quaternary structure, homodimer.

It carries out the reaction XMP + L-glutamine + ATP + H2O = GMP + L-glutamate + AMP + diphosphate + 2 H(+). The protein operates within purine metabolism; GMP biosynthesis; GMP from XMP (L-Gln route): step 1/1. In terms of biological role, catalyzes the synthesis of GMP from XMP. The sequence is that of GMP synthase [glutamine-hydrolyzing] from Ehrlichia canis (strain Jake).